We begin with the raw amino-acid sequence, 97 residues long: MKLTTVLIVAVLVLAACQFTVTDNSGDDTENPSLRSAGENQNPDSTKTITARATRARTNMRRGLSRPSKGCIGGGDPCEFHRGYTCCSEHCIIWVCA.

An N-terminal signal peptide occupies residues 1–22 (MKLTTVLIVAVLVLAACQFTVT). The interval 23 to 49 (DNSGDDTENPSLRSAGENQNPDSTKTI) is disordered. The propeptide occupies 23-60 (DNSGDDTENPSLRSAGENQNPDSTKTITARATRARTNM). Residues 31–45 (NPSLRSAGENQNPDS) show a composition bias toward polar residues. 3 cysteine pairs are disulfide-bonded: C71/C87, C78/C91, and C86/C96.

The protein belongs to the conotoxin O1 superfamily. In terms of tissue distribution, expressed by the venom duct.

It localises to the secreted. Probable neurotoxin with unknown target. Possibly targets ion channels. The sequence is that of Conotoxin Cal6.1e from Californiconus californicus (California cone).